Here is a 93-residue protein sequence, read N- to C-terminus: DNA/RNA-binding protein Alba (93 aa).

The residue at position 11 (Lys11) is an N6-acetyllysine.

This sequence belongs to the histone-like Alba family. Post-translationally, acetylated. Acetylation at Lys-11 decreases DNA-binding affinity.

It is found in the cytoplasm. It localises to the chromosome. Functionally, binds double-stranded DNA tightly but without sequence specificity. Involved in DNA compaction. This chain is DNA/RNA-binding protein Alba, found in Pyrococcus abyssi (strain GE5 / Orsay).